The following is a 1061-amino-acid chain: Atrial natriuretic peptide receptor 1 (1061 aa).

A signal peptide spans 1 to 32; sequence MPGPRRPAGSRLRLLLLLLLPPLLLLLRGSHA. Over 33–473 the chain is Extracellular; sequence GNLTVAVVLP…CNQDHLSTLE (441 aa). Asn34 and Asn45 each carry an N-linked (GlcNAc...) asparagine glycan. Positions 85, 117, and 118 each coordinate chloride. Disulfide bonds link Cys92–Cys118 and Cys196–Cys245. Residues Asn212, Asn338, Asn379, Asn386, and Asn427 are each glycosylated (N-linked (GlcNAc...) asparagine). A disulfide bond links Cys455 and Cys464. Residues 474 to 494 traverse the membrane as a helical segment; it reads VLALVGSLSLLGILIVSFFIY. At 495 to 1061 the chain is on the cytoplasmic side; that stretch reads RKMQLEKELA…LGERGSSTRG (567 aa). Phosphoserine is present on residues Ser519 and Ser529. One can recognise a Protein kinase domain in the interval 528–805; the sequence is GSRLTLSGRG…QIRLTLRKFN (278 aa). Position 532 is a phosphothreonine (Thr532). 3 positions are modified to phosphoserine: Ser534, Ser538, and Ser542. Residue Thr545 is modified to Phosphothreonine. In terms of domain architecture, Guanylate cyclase spans 876–1006; that stretch reads TIYFSDIVGF…DTVNTASRME (131 aa).

Belongs to the adenylyl cyclase class-4/guanylyl cyclase family. Homodimer. In terms of processing, phosphorylation of the protein kinase-like domain is required for full activation by ANP.

The protein resides in the membrane. The catalysed reaction is GTP = 3',5'-cyclic GMP + diphosphate. Its function is as follows. Receptor for the atrial natriuretic peptide NPPA/ANP and the brain natriuretic peptide NPPB/BNP which are potent vasoactive hormones playing a key role in cardiovascular homeostasis. Plays an essential role in the regulation of endothelial cell senescence and vascular aging. Upon activation by ANP or BNP, stimulates the production of cyclic guanosine monophosphate (cGMP) that promotes vascular tone and volume homeostasis by activation of protein kinase cGMP-dependent 1/PRKG1 and subsequently PRKAA1, thereby controlling blood pressure and maintaining cardiovascular homeostasis. The chain is Atrial natriuretic peptide receptor 1 from Homo sapiens (Human).